Here is a 351-residue protein sequence, read N- to C-terminus: Homocitrate synthase (351 aa).

The Pyruvate carboxyltransferase domain maps to 23 to 272; sequence IKFCDTTLRD…KLPVDLDTTS (250 aa).

Belongs to the alpha-IPM synthase/homocitrate synthase family.

The catalysed reaction is acetyl-CoA + 2-oxoglutarate + H2O = (2R)-homocitrate + CoA + H(+). In terms of biological role, this protein is a Fe-Mo-cofactor biosynthetic component. The chain is Homocitrate synthase (nifV) from Frankia alni.